Here is a 292-residue protein sequence, read N- to C-terminus: uncharacterized protein (292 aa).

A run of 10 helical transmembrane segments spans residues 6 to 26, 32 to 52, 68 to 88, 94 to 114, 123 to 143, 147 to 167, 182 to 202, 214 to 234, 242 to 262, and 265 to 285; these read LGIISVTLIWGYTWVAMKVGI, LLFSGLRLFIGAVPLFLILFI, IIMSLLMGLGYMGILTYGMQF, TSVLVYTMPIFVTVISHFSLN, MGLVCGLFGLLFIFGKEMLNI, ALFGELCVLVAALSWGIANVF, AWHLMMGAVMLLVFSFIFEAV, SLLFNGLLSTGFTFVVWFWVL, ASMALMFVPVLALFFGWLQLH, and ITINIILGALLICCGIFMNTF. EamA domains follow at residues 13 to 137 and 159 to 285; these read LIWG…FIFG and LSWG…MNTF.

This sequence belongs to the EamA transporter family.

Its subcellular location is the cell membrane. This is an uncharacterized protein from Bacillus subtilis (strain 168).